The primary structure comprises 91 residues: Large ribosomal subunit protein bL31 (91 aa).

The segment at R62–G91 is disordered.

It belongs to the bacterial ribosomal protein bL31 family. Type A subfamily. As to quaternary structure, part of the 50S ribosomal subunit.

Its function is as follows. Binds the 23S rRNA. This is Large ribosomal subunit protein bL31 from Thermosynechococcus vestitus (strain NIES-2133 / IAM M-273 / BP-1).